A 225-amino-acid chain; its full sequence is Large ribosomal subunit protein uL4 (225 aa).

Residues 46–102 form a disordered region; the sequence is KRQGTHATKGRGEVRGGGRKPFRQKGTGRARQGSIRAPHFTGGGTVHGPQPRDYSQR. The segment covering 62–73 has biased composition (basic residues); the sequence is GGRKPFRQKGTG.

This sequence belongs to the universal ribosomal protein uL4 family. As to quaternary structure, part of the 50S ribosomal subunit.

In terms of biological role, one of the primary rRNA binding proteins, this protein initially binds near the 5'-end of the 23S rRNA. It is important during the early stages of 50S assembly. It makes multiple contacts with different domains of the 23S rRNA in the assembled 50S subunit and ribosome. Functionally, forms part of the polypeptide exit tunnel. In Corynebacterium urealyticum (strain ATCC 43042 / DSM 7109), this protein is Large ribosomal subunit protein uL4.